Here is a 969-residue protein sequence, read N- to C-terminus: Endogenous retrovirus group K member 11 Pol protein (969 aa).

Residues 57–245 form the Reverse transcriptase domain; it reads LEKGHIEPSF…TPFHYLGMQI (189 aa). An LPQG motif is present at residues 161–164; sequence LPQG. The RNase H type-1 domain maps to 460–590; that stretch reads LENALTVFTD…ADLLVSSALI (131 aa). D469, E497, D517, and D582 together coordinate Mg(2+). Residues 587–628 form an Integrase-type zinc finger; that stretch reads SALIKAQELHALTHVNAAGLKNKFDVTWKQAKDIVQHCTQCQ. 4 residues coordinate Zn(2+): H596, H600, C624, and C627. The region spanning 642-803 is the Integrase catalytic domain; the sequence is RGLCPNALWQ…TSAEQHLTGK (162 aa). Positions 811-859 form a DNA-binding region, integrase-type; it reads KLIWWKDNKNKTWEIGKVITWGRGFACVSPGENQLPVWIPTRHLKFYNE.

This sequence belongs to the beta type-B retroviral polymerase family. HERV class-II K(HML-2) pol subfamily.

The catalysed reaction is DNA(n) + a 2'-deoxyribonucleoside 5'-triphosphate = DNA(n+1) + diphosphate. It catalyses the reaction Endonucleolytic cleavage to 5'-phosphomonoester.. Its function is as follows. Early post-infection, the reverse transcriptase converts the viral RNA genome into double-stranded viral DNA. The RNase H domain of the reverse transcriptase performs two functions. It degrades the RNA template and specifically removes the RNA primer from the RNA/DNA hybrid. Following nuclear import, the integrase catalyzes the insertion of the linear, double-stranded viral DNA into the host cell chromosome. Endogenous Pol proteins may have kept, lost or modified their original function during evolution. This Homo sapiens (Human) protein is Endogenous retrovirus group K member 11 Pol protein (ERVK-11).